We begin with the raw amino-acid sequence, 203 residues long: UPF0637 protein EF_3078 (203 aa).

The protein belongs to the UPF0637 family.

The protein is UPF0637 protein EF_3078 of Enterococcus faecalis (strain ATCC 700802 / V583).